An 858-amino-acid chain; its full sequence is Volume-regulated anion channel subunit LRRC8D (858 aa).

Residues 1 to 22 are Cytoplasmic-facing; that stretch reads MFTLAEVASLNDIQPTYRILKP. A helical transmembrane segment spans residues 23-48; it reads WWDVFMDYLAVVMLMVAIFAGTMQLT. Residues 49–163 are Extracellular-facing; the sequence is KDQVVCLPVL…YHLALPWYSK (115 aa). A disulfide bridge links Cys54 with Cys354. The helical transmembrane segment at 164–182 threads the bilayer; sequence YFPYLALIHTIILMVSSNF. Residues 183 to 308 are Cytoplasmic-facing; the sequence is WFKYPKTCSK…EDSDLIYKLY (126 aa). Residues 221–251 form a disordered region; the sequence is SEENKQRITGAQTLPKHVSTSSDEGSPSAST. Residues 227 to 251 show a composition bias toward polar residues; that stretch reads RITGAQTLPKHVSTSSDEGSPSAST. A phosphoserine mark is found at Ser241, Ser242, and Ser246. A helical membrane pass occupies residues 309-328; the sequence is VVQTVIKTAKFIFILCYTAN. Residues 329 to 360 lie on the Extracellular side of the membrane; the sequence is FVNAISFEHVCKPKVEHLIGYEVFECTHNMAY. Residues 361–386 traverse the membrane as a helical segment; that stretch reads MLKKLLISYISIICVYGFICLYTLFW. The Cytoplasmic portion of the chain corresponds to 387 to 858; the sequence is LFRIPLKEYS…DINIPFANGI (472 aa). 13 LRR repeats span residues 514–534, 538–559, 561–582, 589–609, 612–632, 636–657, 659–680, 684–705, 707–728, 730–751, 753–774, 776–797, and 799–820; these read NLQE…AFSF, HLRC…VYLL, NLRE…IGLE, HLKI…ITDV, HLTK…NSLK, NVAE…IFSL, NLQE…ISFQ, RLTC…ITHV, NLES…VFSL, KLRC…IGLL, NLQH…LFKC, KLRT…VGQL, and QLTQ…LGQC.

This sequence belongs to the LRRC8 family. As to quaternary structure, heterohexamer; oligomerizes with other LRRC8 proteins (LRRC8A, LRRC8B, LRRC8C and/or LRRC8E) to form a heterohexamer. In vivo, the subunit composition may depend primarily on expression levels, and heterooligomeric channels containing various proportions of the different LRRC8 proteins may coexist.

It localises to the cell membrane. The protein localises to the endoplasmic reticulum membrane. The enzyme catalyses chloride(in) = chloride(out). The catalysed reaction is iodide(out) = iodide(in). It carries out the reaction taurine(out) = taurine(in). Its function is as follows. Non-essential component of the volume-regulated anion channel (VRAC, also named VSOAC channel), an anion channel required to maintain a constant cell volume in response to extracellular or intracellular osmotic changes. The VRAC channel conducts iodide better than chloride and can also conduct organic osmolytes like taurine. Plays a redundant role in the efflux of amino acids, such as aspartate, in response to osmotic stress. LRRC8A and LRRC8D are required for the uptake of the drug cisplatin. Channel activity requires LRRC8A plus at least one other family member (LRRC8B, LRRC8C, LRRC8D or LRRC8E); channel characteristics depend on the precise subunit composition. Also acts as a regulator of glucose-sensing in pancreatic beta cells: VRAC currents, generated in response to hypotonicity- or glucose-induced beta cell swelling, depolarize cells, thereby causing electrical excitation, leading to increase glucose sensitivity and insulin secretion. VRAC channels containing LRRC8D inhibit transport of immunoreactive cyclic dinucleotide GMP-AMP (2'-3'-cGAMP), an immune messenger produced in response to DNA virus in the cytosol. Mediates the import of the antibiotic blasticidin-S into the cell. The chain is Volume-regulated anion channel subunit LRRC8D from Homo sapiens (Human).